The chain runs to 1298 residues: DNA repair protein rad-50 (1298 aa).

Positions 13, 38, 39, 41, 42, 43, 44, 66, and 158 each coordinate ATP. Thr-43 is a Mg(2+) binding site. A Mg(2+)-binding site is contributed by Gln-158. Coiled-coil stretches lie at residues 222–291, 317–598, and 622–660; these read ARQN…IRVE, EERA…QYRK, and AEEVSEKLENLRKRLKKARKDLAPLSAKSNLYDSYIEES. Residues 622 to 719 form the Zinc-hook domain; sequence AEEVSEKLEN…EEIIIVKAEG (98 aa). Residues Cys-666 and Cys-669 each contribute to the Zn(2+) site. 2 coiled-coil regions span residues 691–719 and 754–1092; these read LSFPTEQEELEKLVSKLEKEEIIIVKAEG and KNEK…KESI.

The protein belongs to the SMC family. RAD50 subfamily. In terms of assembly, component of the MRN complex composed of two heterodimers rad-50 and mre-11 associated with a single nbs-1. It depends on Zn(2+) as a cofactor.

Its subcellular location is the nucleus. The protein localises to the chromosome. It catalyses the reaction ATP + H2O = ADP + phosphate + H(+). Its function is as follows. Component of the MRN complex, which plays a central role in double-strand break (DSB) repair, DNA recombination, maintenance of telomere integrity and meiosis. The MRN complex is involved in the repair of DNA double-strand breaks (DSBs) via homologous recombination (HR), an error-free mechanism which primarily occurs during S and G2 phases. The complex (1) mediates the end resection of damaged DNA, which generates proper single-stranded DNA, a key initial steps in HR, and is (2) required for the recruitment of other repair factors and efficient activation of ATM and ATR upon DNA damage. The MRN complex possesses single-strand endonuclease activity and double-strand-specific 3'-5' exonuclease activity, which are provided by mre-11, to initiate end resection, which is required for single-strand invasion and recombination. Within the complex, rad-50 is both required to bind DNA ends and hold them in close proximity and regulate the activity of mre-11. Rad-50 provides an ATP-dependent control of mre-11 by positioning DNA ends into the mre-11 active site: ATP-binding induces a large structural change from an open form with accessible mre-11 nuclease sites into a closed form. This is DNA repair protein rad-50 (rad-50) from Caenorhabditis elegans.